The primary structure comprises 331 residues: Glyceraldehyde-3-phosphate dehydrogenase 3 (331 aa).

NAD(+) is bound by residues 11–12 (RI), aspartate 33, and glutamate 77. Serine 148 is modified (phosphoserine). D-glyceraldehyde 3-phosphate is bound at residue 148-150 (SCT). Cysteine 149 functions as the Nucleophile in the catalytic mechanism. At serine 177 the chain carries Phosphoserine. Residue threonine 179 coordinates D-glyceraldehyde 3-phosphate. Serine 200 carries the post-translational modification Phosphoserine. D-glyceraldehyde 3-phosphate is bound by residues 208–209 (TG) and arginine 231. Asparagine 313 contributes to the NAD(+) binding site.

It belongs to the glyceraldehyde-3-phosphate dehydrogenase family. As to quaternary structure, homotetramer.

It is found in the cytoplasm. The enzyme catalyses D-glyceraldehyde 3-phosphate + phosphate + NAD(+) = (2R)-3-phospho-glyceroyl phosphate + NADH + H(+). It participates in carbohydrate degradation; glycolysis; pyruvate from D-glyceraldehyde 3-phosphate: step 1/5. The sequence is that of Glyceraldehyde-3-phosphate dehydrogenase 3 from Kluyveromyces marxianus (Yeast).